We begin with the raw amino-acid sequence, 248 residues long: Proteasome subunit alpha type-7 (248 aa).

Residue Ser-130 is glycosylated (O-linked (GlcNAc) serine). Tyr-153 is subject to Phosphotyrosine; by ABL1 and ABL2. The residue at position 227 (Lys-227) is an N6-acetyllysine.

The protein belongs to the peptidase T1A family. In terms of assembly, the 26S proteasome consists of a 20S proteasome core and two 19S regulatory subunits. The 20S proteasome core is a barrel-shaped complex made of 28 subunits that are arranged in four stacked rings. The two outer rings are each formed by seven alpha subunits, and the two inner rings are formed by seven beta subunits. The proteolytic activity is exerted by three beta-subunits PSMB5, PSMB6 and PSMB7. PSMA7 interacts directly with the PSMG1-PSMG2 heterodimer which promotes 20S proteasome assembly. Interacts with HIF1A. Interacts with RAB7A. Interacts with PRKN. Interacts with ABL1 and ABL2. Interacts with EMAP2. Interacts with MAVS. In terms of processing, phosphorylation by ABL1 or ABL2 leads to an inhibition of proteasomal activity and cell cycle transition blocks. In terms of tissue distribution, detected in liver (at protein level).

It is found in the cytoplasm. The protein resides in the nucleus. Component of the 20S core proteasome complex involved in the proteolytic degradation of most intracellular proteins. This complex plays numerous essential roles within the cell by associating with different regulatory particles. Associated with two 19S regulatory particles, forms the 26S proteasome and thus participates in the ATP-dependent degradation of ubiquitinated proteins. The 26S proteasome plays a key role in the maintenance of protein homeostasis by removing misfolded or damaged proteins that could impair cellular functions, and by removing proteins whose functions are no longer required. Associated with the PA200 or PA28, the 20S proteasome mediates ubiquitin-independent protein degradation. This type of proteolysis is required in several pathways including spermatogenesis (20S-PA200 complex) or generation of a subset of MHC class I-presented antigenic peptides (20S-PA28 complex). This Mus musculus (Mouse) protein is Proteasome subunit alpha type-7 (Psma7).